Reading from the N-terminus, the 869-residue chain is AP-3 complex subunit delta (869 aa).

Position 2 is an N-acetylserine (Ser2). HEAT repeat units lie at residues 33 to 70, 107 to 142, 143 to 179, 180 to 216, 218 to 254, 292 to 329, and 330 to 366; these read NFISRAVEEIRREIKATDLSTKSTALHKLSYLAALHGV, SVMLLITNQVRKDLNSANEYEVSLALECLSRIGTHD, LARDLTPEVFTLLGSSKSFVKKKAIGVVLRVFEKYHD, AVKVCFKRLVENLETSDPQILSAVVGVFCELATKDPQ, CLPLAPEFYKVLVDSRNNWVLIKVLKIFAKLALIEPR, AAVKLAVAKIREFLVEDDPNLKYLGLNALSIVAPKHLW, and AVLENKEVVVKAMSDEDPNVKLEALHLLMAMVNEDNV. Positions 738–869 are disordered; it reads ISQDSFNPKR…EQVIIPDFLL (132 aa). The segment covering 769-780 has biased composition (polar residues); sequence ITPQAKTNIQTA. The segment covering 815 to 830 has biased composition (basic and acidic residues); that stretch reads QEKEESSRIENHQNSE. A compositionally biased stretch (basic residues) spans 831 to 850; the sequence is KKKKKKKKKKGEGSSKHKSR.

Belongs to the adaptor complexes large subunit family. Adaptor protein complex 3 (AP-3) is a heterotetramer composed of two large adaptins (delta-type subunit and beta-type subunit), a medium adaptin (mu-type subunit) and a small adaptin (sigma-type subunit). Binds to EPSIN2.

Its subcellular location is the cytoplasm. It is found in the golgi apparatus membrane. In terms of biological role, part of the AP-3 complex, an adaptor-related complex which seems to be clathrin-associated. The complex is associated with the Golgi region as well as more peripheral structures. It facilitates the budding of vesicles from the Golgi membrane and may be directly involved in trafficking to the vacuole. It also function in maintaining the identity of lytic vacuoles and in regulating the transition between storage and lytic vacuoles. The sequence is that of AP-3 complex subunit delta (DELTA-ADR) from Arabidopsis thaliana (Mouse-ear cress).